Consider the following 251-residue polypeptide: Flap endonuclease Xni (251 aa).

Residue D104 coordinates Mg(2+). In terms of domain architecture, 5'-3' exonuclease spans 160-249 (VLPRQLPDYW…IDGNLQQLRL (90 aa)). The K(+) site is built by L171, A172, P180, V182, and I185. Residues 184 to 189 (GIGPKS) are interaction with DNA.

It belongs to the Xni family. The cofactor is Mg(2+). K(+) is required as a cofactor.

In terms of biological role, has flap endonuclease activity. During DNA replication, flap endonucleases cleave the 5'-overhanging flap structure that is generated by displacement synthesis when DNA polymerase encounters the 5'-end of a downstream Okazaki fragment. The protein is Flap endonuclease Xni of Salmonella typhimurium (strain LT2 / SGSC1412 / ATCC 700720).